Reading from the N-terminus, the 370-residue chain is MASADSNTLPRAPGDGDGVVISVDAMGGDRGPATVVAGMAESAGKNPGIRFIVHGPQAELERLIARRGDLAGRCDIRDAAGVVTMDDKPSQVLRKGEGTSMWSTLESVRQGEATAAVSCGNTGALMALSMLRLRKLPGVNRPAIACLWPSRNPQGFNVMLDVGADIRADAQDLLTYALMGASYARNGFGLERPRVGLLNVGTEEHKGRPELKQAHELIPTTAQAANFDYVGFVEGGDLPSARVDVIVTDGFTGNVALKTGEGTAKLVGELLKEAFGKSVMSKFAALLAMGSLKRLQKRIDPRRINGGVFLGLNGTVVKSHGSADATGVSAAIKLAFRLAQSGFQDRLAARVAQSVAAAGQINGSKESEAS.

The protein belongs to the PlsX family. As to quaternary structure, homodimer. Probably interacts with PlsY.

It is found in the cytoplasm. It catalyses the reaction a fatty acyl-[ACP] + phosphate = an acyl phosphate + holo-[ACP]. Its pathway is lipid metabolism; phospholipid metabolism. In terms of biological role, catalyzes the reversible formation of acyl-phosphate (acyl-PO(4)) from acyl-[acyl-carrier-protein] (acyl-ACP). This enzyme utilizes acyl-ACP as fatty acyl donor, but not acyl-CoA. This is Phosphate acyltransferase from Paracoccus denitrificans (strain Pd 1222).